Consider the following 337-residue polypeptide: Cytoskeleton protein RodZ (337 aa).

At 1-111 (MNTEATHDQN…LGKRRKKRDG (111 aa)) the chain is on the cytoplasmic side. In terms of domain architecture, HTH cro/C1-type spans 19–71 (LRNAREQLGLSQQAVAERLCLKVSTVRDIEEDKAPADLASTFLRGYIRSYARL). A DNA-binding region (H-T-H motif) is located at residues 30–49 (QQAVAERLCLKVSTVRDIEE). The helical; Signal-anchor for type II membrane protein transmembrane segment at 112–132 (WLMTFTWLVLFVVIGLSGAWW) threads the bilayer. The Periplasmic segment spans residues 133–337 (WQDHKAQQEE…TLNAEQSPAQ (205 aa)). A compositionally biased stretch (polar residues) spans 145-167 (TMADQSSAELSSNSEQGQSVPLN). Residues 145-236 (TMADQSSAEL…TAATTPDGAA (92 aa)) are disordered. Residues 168 to 207 (TSTTTDPATTSTPPASVDTTATNTQTPAVTAPAPAVDPQQ) are compositionally biased toward low complexity. Polar residues predominate over residues 208–218 (NAVVSPSQANV). The span at 219-236 (DTAATPAPTAATTPDGAA) shows a compositional bias: low complexity.

It belongs to the RodZ family.

The protein localises to the cell inner membrane. Functionally, cytoskeletal protein that is involved in cell-shape control through regulation of the length of the long axis. The chain is Cytoskeleton protein RodZ from Escherichia coli O139:H28 (strain E24377A / ETEC).